A 476-amino-acid chain; its full sequence is UDP-N-acetylmuramate--L-alanine ligase (476 aa).

Glycine 125–threonine 131 contributes to the ATP binding site.

It belongs to the MurCDEF family.

The protein resides in the cytoplasm. It carries out the reaction UDP-N-acetyl-alpha-D-muramate + L-alanine + ATP = UDP-N-acetyl-alpha-D-muramoyl-L-alanine + ADP + phosphate + H(+). It functions in the pathway cell wall biogenesis; peptidoglycan biosynthesis. Its function is as follows. Cell wall formation. This is UDP-N-acetylmuramate--L-alanine ligase from Actinobacillus succinogenes (strain ATCC 55618 / DSM 22257 / CCUG 43843 / 130Z).